We begin with the raw amino-acid sequence, 129 residues long: Glycine cleavage system H protein (129 aa).

The Lipoyl-binding domain occupies 24-106 (LLKIGVSEFA…IGEGWLVILK (83 aa)). At lysine 65 the chain carries N6-lipoyllysine.

Belongs to the GcvH family. In terms of assembly, the glycine cleavage system is composed of four proteins: P, T, L and H. It depends on (R)-lipoate as a cofactor.

Functionally, the glycine cleavage system catalyzes the degradation of glycine. The H protein shuttles the methylamine group of glycine from the P protein to the T protein. The protein is Glycine cleavage system H protein of Prochlorococcus marinus (strain AS9601).